A 255-amino-acid chain; its full sequence is tRNA (guanine-N(1)-)-methyltransferase (255 aa).

Residues G113 and 133–138 (IGDYVL) contribute to the S-adenosyl-L-methionine site.

Belongs to the RNA methyltransferase TrmD family. In terms of assembly, homodimer.

It localises to the cytoplasm. It catalyses the reaction guanosine(37) in tRNA + S-adenosyl-L-methionine = N(1)-methylguanosine(37) in tRNA + S-adenosyl-L-homocysteine + H(+). In terms of biological role, specifically methylates guanosine-37 in various tRNAs. The protein is tRNA (guanine-N(1)-)-methyltransferase of Serratia proteamaculans (strain 568).